Here is a 430-residue protein sequence, read N- to C-terminus: ATP-dependent protease ATPase subunit HslU (430 aa).

Residues Val18, 60–65 (GVGKTE), Asp243, Glu308, and Arg380 each bind ATP.

It belongs to the ClpX chaperone family. HslU subfamily. In terms of assembly, a double ring-shaped homohexamer of HslV is capped on each side by a ring-shaped HslU homohexamer. The assembly of the HslU/HslV complex is dependent on binding of ATP.

The protein localises to the cytoplasm. In terms of biological role, ATPase subunit of a proteasome-like degradation complex; this subunit has chaperone activity. The binding of ATP and its subsequent hydrolysis by HslU are essential for unfolding of protein substrates subsequently hydrolyzed by HslV. HslU recognizes the N-terminal part of its protein substrates and unfolds these before they are guided to HslV for hydrolysis. This chain is ATP-dependent protease ATPase subunit HslU, found in Caulobacter vibrioides (strain ATCC 19089 / CIP 103742 / CB 15) (Caulobacter crescentus).